Here is a 143-residue protein sequence, read N- to C-terminus: Large-conductance mechanosensitive channel (143 aa).

2 consecutive transmembrane segments (helical) span residues 10 to 30 (FAVKGNVMDLAVGVIIGGAFS) and 89 to 109 (GSFITVAINFVILAFIIFLMV).

It belongs to the MscL family. Homopentamer.

The protein resides in the cell inner membrane. In terms of biological role, channel that opens in response to stretch forces in the membrane lipid bilayer. May participate in the regulation of osmotic pressure changes within the cell. The sequence is that of Large-conductance mechanosensitive channel from Burkholderia cenocepacia (strain HI2424).